Reading from the N-terminus, the 549-residue chain is Probable serine/threonine-protein kinase WNK5 (549 aa).

The Protein kinase domain maps to 25–283 (GRFREVLGKG…AKELLADPFL (259 aa)). ATP-binding positions include 105–108 (TELF) and K155. D172 (proton acceptor) is an active-site residue. Positions 414–490 (ESFGHEDDED…SPAIDDDQNQ (77 aa)) are disordered. The span at 452 to 463 (DDSSNDVIPDMD) shows a compositional bias: acidic residues. Positions 467–476 (RSSNRLLNSS) are enriched in low complexity. A Phosphoserine modification is found at S504. A disordered region spans residues 525–549 (RGRGFDPNTNELQPQPSSTDFIRRC). Over residues 531–549 (PNTNELQPQPSSTDFIRRC) the composition is skewed to polar residues.

This sequence belongs to the protein kinase superfamily. Ser/Thr protein kinase family. WNK subfamily. As to quaternary structure, interacts with AHK4.

The catalysed reaction is L-seryl-[protein] + ATP = O-phospho-L-seryl-[protein] + ADP + H(+). It catalyses the reaction L-threonyl-[protein] + ATP = O-phospho-L-threonyl-[protein] + ADP + H(+). Functionally, regulates flowering time by modulating the photoperiod pathway. The sequence is that of Probable serine/threonine-protein kinase WNK5 (WNK5) from Arabidopsis thaliana (Mouse-ear cress).